The sequence spans 127 residues: MSRDAFLGKYLSMAGPDEARNKVFIGVTKINGTILERIKALAERLGIPADAIMVEKAGILVPDVPEGKLNATIKLSKVEISLPERSSIQPPENYTVNSDRWNNQETLLRPLFGVFETLARLIDWLIS.

This is an uncharacterized protein from Archaeoglobus fulgidus (strain ATCC 49558 / DSM 4304 / JCM 9628 / NBRC 100126 / VC-16).